The primary structure comprises 119 residues: Ribonuclease P protein component (119 aa).

It belongs to the RnpA family. As to quaternary structure, consists of a catalytic RNA component (M1 or rnpB) and a protein subunit.

The enzyme catalyses Endonucleolytic cleavage of RNA, removing 5'-extranucleotides from tRNA precursor.. Functionally, RNaseP catalyzes the removal of the 5'-leader sequence from pre-tRNA to produce the mature 5'-terminus. It can also cleave other RNA substrates such as 4.5S RNA. The protein component plays an auxiliary but essential role in vivo by binding to the 5'-leader sequence and broadening the substrate specificity of the ribozyme. This chain is Ribonuclease P protein component, found in Dictyoglomus turgidum (strain DSM 6724 / Z-1310).